The following is a 401-amino-acid chain: 1-deoxy-D-xylulose 5-phosphate reductoisomerase (401 aa).

NADPH-binding residues include T11, G12, S13, I14, R38, N39, and N125. A 1-deoxy-D-xylulose 5-phosphate-binding site is contributed by K126. Position 127 (E127) interacts with NADPH. A Mn(2+)-binding site is contributed by D151. The 1-deoxy-D-xylulose 5-phosphate site is built by S152, E153, S179, and H202. E153 contacts Mn(2+). Residue G208 coordinates NADPH. 1-deoxy-D-xylulose 5-phosphate-binding residues include S215, N220, K221, and E224. Mn(2+) is bound at residue E224.

This sequence belongs to the DXR family. It depends on Mg(2+) as a cofactor. Mn(2+) serves as cofactor.

The enzyme catalyses 2-C-methyl-D-erythritol 4-phosphate + NADP(+) = 1-deoxy-D-xylulose 5-phosphate + NADPH + H(+). Its pathway is isoprenoid biosynthesis; isopentenyl diphosphate biosynthesis via DXP pathway; isopentenyl diphosphate from 1-deoxy-D-xylulose 5-phosphate: step 1/6. Functionally, catalyzes the NADPH-dependent rearrangement and reduction of 1-deoxy-D-xylulose-5-phosphate (DXP) to 2-C-methyl-D-erythritol 4-phosphate (MEP). This chain is 1-deoxy-D-xylulose 5-phosphate reductoisomerase, found in Paraburkholderia phytofirmans (strain DSM 17436 / LMG 22146 / PsJN) (Burkholderia phytofirmans).